A 362-amino-acid chain; its full sequence is Chorismate synthase (362 aa).

R48 and R54 together coordinate NADP(+). FMN-binding positions include 131–133 (RSS), 243–244 (NA), G287, 302–306 (KPTSS), and R328.

It belongs to the chorismate synthase family. As to quaternary structure, homotetramer. The cofactor is FMNH2.

The enzyme catalyses 5-O-(1-carboxyvinyl)-3-phosphoshikimate = chorismate + phosphate. The protein operates within metabolic intermediate biosynthesis; chorismate biosynthesis; chorismate from D-erythrose 4-phosphate and phosphoenolpyruvate: step 7/7. In terms of biological role, catalyzes the anti-1,4-elimination of the C-3 phosphate and the C-6 proR hydrogen from 5-enolpyruvylshikimate-3-phosphate (EPSP) to yield chorismate, which is the branch point compound that serves as the starting substrate for the three terminal pathways of aromatic amino acid biosynthesis. This reaction introduces a second double bond into the aromatic ring system. The polypeptide is Chorismate synthase (Rhodopseudomonas palustris (strain BisB18)).